The sequence spans 303 residues: Phosphatidylglycerol--prolipoprotein diacylglyceryl transferase (303 aa).

The next 4 membrane-spanning stretches (helical) occupy residues 18 to 38 (LGPF…LVGL), 58 to 78 (LLPI…VAFE), 106 to 126 (IWGG…SIIF), and 133 to 153 (EPFW…QAIG). Position 154 (Arg-154) interacts with a 1,2-diacyl-sn-glycero-3-phospho-(1'-sn-glycerol). 3 helical membrane-spanning segments follow: residues 193-213 (PTFL…IFLF), 223-243 (LPPG…RFWI), and 266-286 (IAQL…WRIY).

It belongs to the Lgt family.

The protein resides in the cell inner membrane. It catalyses the reaction L-cysteinyl-[prolipoprotein] + a 1,2-diacyl-sn-glycero-3-phospho-(1'-sn-glycerol) = an S-1,2-diacyl-sn-glyceryl-L-cysteinyl-[prolipoprotein] + sn-glycerol 1-phosphate + H(+). Its pathway is protein modification; lipoprotein biosynthesis (diacylglyceryl transfer). Functionally, catalyzes the transfer of the diacylglyceryl group from phosphatidylglycerol to the sulfhydryl group of the N-terminal cysteine of a prolipoprotein, the first step in the formation of mature lipoproteins. The sequence is that of Phosphatidylglycerol--prolipoprotein diacylglyceryl transferase from Prochlorococcus marinus (strain NATL1A).